We begin with the raw amino-acid sequence, 51 residues long: Large ribosomal subunit protein bL33 (51 aa).

Belongs to the bacterial ribosomal protein bL33 family.

The protein is Large ribosomal subunit protein bL33 of Francisella tularensis subsp. tularensis (strain FSC 198).